A 150-amino-acid chain; its full sequence is Ribosome maturation factor RimP (150 aa).

This sequence belongs to the RimP family.

The protein localises to the cytoplasm. In terms of biological role, required for maturation of 30S ribosomal subunits. In Methylococcus capsulatus (strain ATCC 33009 / NCIMB 11132 / Bath), this protein is Ribosome maturation factor RimP.